The chain runs to 101 residues: Small ribosomal subunit protein uS14 (101 aa).

The protein belongs to the universal ribosomal protein uS14 family. As to quaternary structure, part of the 30S ribosomal subunit. Contacts proteins S3 and S10.

Its function is as follows. Binds 16S rRNA, required for the assembly of 30S particles and may also be responsible for determining the conformation of the 16S rRNA at the A site. This chain is Small ribosomal subunit protein uS14, found in Pseudoalteromonas atlantica (strain T6c / ATCC BAA-1087).